A 1500-amino-acid polypeptide reads, in one-letter code: MLEINDFNAIRISLASPEDIRSWSHGEVTKPETINYRTLKPERDGLFCERIFGPTKDWECFCGKYKRVRYKGVVCDKCGVEVTRAKVRRERMGHINLASPVSHIWFVKGTPSRLGLLLDISPRNLERVLYFASYIIVDVKEDMLQVAREMVQEEYAARREKIQKQAEEKRIELSTQLTQDLGGMETAQRSTQRQIEEDYRRQRDELVGEAERLRERLEEMSGTLADEDIIFRGVTVVEEGELINDNTLDQLDELVEQELEVLEERRRRDLADAELLTDAERERKAYEATQEQERLQERLQRELDMLVREEKEKLEQLDKLKVGLIITENEYRQLRDVAPGVFRADMGAGAIRELLERHLNLDKLAEELQAEIQTSQGQRRKKATKRLRIVEAFRKSGNRPEWMILTVLPVIPPDLRPMVQLDGGRFATSDLNDLYRRVINRNNRLKRLIELNAPEIIVRNEKRMLQEAVDALIDNGRRGRAVSGKGKHRLKSLSDMLKGKQGRFRQNLLGKRVDYSGRSVIVVGPNLQLHQCGLPKKMALELFKPFVMRRLVERGVAHNIKNAKRAVERVRPEVWDALEEVIKDYLVLLNRAPSLHRLSIQAFEAKLIEGSAIQLHPLVCAAFNADFDGDQMAVHVPLSRKAQEEARTRMLSKYNLLSPAHGEPIITPSQDIVLGCYYLTMVRDGAKGTGKRFASIDEAMLAYEKGLIDIQAPIWIRMNGSISGKSDRPVRELPPASDGTPRMVIETTIGRVLLNSELQPPLRFRNRLIDKKGLKEIIADCYQYYTSLRNLSEAQLNEVRAAHGNKHVQELARIYGSEMTAQQADRIKTLGFRYATLGGMTIGIDDIEVPAKKYDIVREAEQQVAEVEKQFRRGLITEEERYQEVVRIWQEATKQTIAAVKENLNPFGPVAMMSTSGARGNINQISQMAGMRGLMSDPTGRIIELPIKANFREGLSVLDYFVSTHGGRKGLADTALRTADAGYLTRRLVDVAQDVIINIEDCGTEEGLWLHSADDGELMEKLQVRMLGRILAAPIYDKTTGELIADRNTEIDEELAEKIIAAGHESVFVRSPLTCQAEHGLCRMCYGRNLATGKLVEIGEAVGIIAAQSIGEPGTQLTLRTFHTGGVASADDITQGLPRVQEIFEARVPKGKALLAEIDGVVQIIREDEGVRKIRIVSTNVYTDEYPLTRGFTPVIESESDVYEGQVIAEGPGGEQIIARLSGKAFIQSDRIIISQEDHEERELVVPHNARIRVENGDRVMAGQQLTDGSANPQELLELQGREAVQRYLVNEAQKVYRSQGVNINDKHIEVIARQMLRRVRIEEPGDTGLLPGELIDSAEFRRLNNDIVSQGGDPATAATVLLGITKASLNTDSFLSAASFQETTRVLTDAAIQGKVDYLRGLKENVVIGKLIPAGTGIEKRLERQHEDLISEMARMLEEVQQAEKSAEPTTTALPTTNGHQAPQSDTDALLRARLEELLSGGNDHDDEEDSDHPDLSSL.

Zn(2+) is bound by residues C60, C62, C75, and C78. The tract at residues 180–199 (DLGGMETAQRSTQRQIEEDY) is disordered. D626, D628, and D630 together coordinate Mg(2+). C1002, C1075, C1082, and C1085 together coordinate Zn(2+). A disordered region spans residues 1440–1500 (EVQQAEKSAE…DSDHPDLSSL (61 aa)). Over residues 1449 to 1468 (EPTTTALPTTNGHQAPQSDT) the composition is skewed to polar residues.

The protein belongs to the RNA polymerase beta' chain family. As to quaternary structure, the RNAP catalytic core consists of 2 alpha, 1 beta, 1 beta' and 1 omega subunit. When a sigma factor is associated with the core the holoenzyme is formed, which can initiate transcription. It depends on Mg(2+) as a cofactor. Zn(2+) is required as a cofactor.

The enzyme catalyses RNA(n) + a ribonucleoside 5'-triphosphate = RNA(n+1) + diphosphate. In terms of biological role, DNA-dependent RNA polymerase catalyzes the transcription of DNA into RNA using the four ribonucleoside triphosphates as substrates. The sequence is that of DNA-directed RNA polymerase subunit beta' from Chloroflexus aggregans (strain MD-66 / DSM 9485).